We begin with the raw amino-acid sequence, 469 residues long: Argininosuccinate lyase (469 aa).

Belongs to the lyase 1 family. Argininosuccinate lyase subfamily.

It localises to the cytoplasm. The enzyme catalyses 2-(N(omega)-L-arginino)succinate = fumarate + L-arginine. Its pathway is amino-acid biosynthesis; L-arginine biosynthesis; L-arginine from L-ornithine and carbamoyl phosphate: step 3/3. This Novosphingobium aromaticivorans (strain ATCC 700278 / DSM 12444 / CCUG 56034 / CIP 105152 / NBRC 16084 / F199) protein is Argininosuccinate lyase.